Here is a 743-residue protein sequence, read N- to C-terminus: POU domain, class 2, transcription factor 1 (743 aa).

Over residues Met-1–Ser-11 the composition is skewed to polar residues. Disordered regions lie at residues Met-1–Pro-34, Ser-67–Ala-95, Ala-258–Ser-283, and Ser-357–Lys-381. Residues Ser-81–Ala-95 show a composition bias toward low complexity. Thr-270 and Thr-276 each carry phosphothreonine. The 75-residue stretch at Glu-280–Glu-354 folds into the POU-specific domain. Ser-283 bears the Phosphoserine mark. Residues Ser-357–Pro-371 are compositionally biased toward low complexity. The segment at residues Arg-379 to Asn-438 is a DNA-binding region (homeobox). Phosphoserine is present on residues Ser-385 and Ser-448. Residues Val-494–Asn-504 show a composition bias toward polar residues. Residues Val-494–Leu-557 are disordered. The span at Thr-505–Leu-557 shows a compositional bias: low complexity.

It belongs to the POU transcription factor family. Class-2 subfamily. As to quaternary structure, interacts with POU2AF1; the interaction increases POU2F1 transactivation activity. Interacts with NR3C1, AR, PGR and HCFC1. (Microbial infection) Associates with the herpes simplex virus VP16-induced complex; binding to HCFC1 activates the viral transcriptional activator VP16 for association with POU2F1, to form a multiprotein-DNA complex responsible for activating transcription of the viral immediate early genes. In terms of assembly, (Microbial infection) Interacts with human herpesvirus 8 (KSHV) protein RTA/ORF50; this interaction enhances RTA/ORF50-mediated transactivation of several viral promoters including K-bZIP promoter. Phosphorylated by PRKDC. As to expression, ubiquitous. Isoform 2 is lymphocyte-specific.

Its subcellular location is the nucleus. In terms of biological role, transcription factor that binds to the octamer motif (5'-ATTTGCAT-3') and activates the promoters of the genes for some small nuclear RNAs (snRNA) and of genes such as those for histone H2B and immunoglobulins. Modulates transcription transactivation by NR3C1, AR and PGR. Its function is as follows. (Microbial infection) In case of human herpes simplex virus (HSV) infection, POU2F1 forms a multiprotein-DNA complex with the viral transactivator protein VP16 and HCFC1 thereby enabling the transcription of the viral immediate early genes. This is POU domain, class 2, transcription factor 1 (POU2F1) from Homo sapiens (Human).